The primary structure comprises 117 residues: NADH-ubiquinone oxidoreductase chain 3 (117 aa).

A run of 3 helical transmembrane segments spans residues 1–21 (MLSL…LLLV), 56–76 (FFLV…ILPY), and 86–106 (TFYN…GLMY).

It belongs to the complex I subunit 3 family.

Its subcellular location is the mitochondrion membrane. The enzyme catalyses a ubiquinone + NADH + 5 H(+)(in) = a ubiquinol + NAD(+) + 4 H(+)(out). In terms of biological role, core subunit of the mitochondrial membrane respiratory chain NADH dehydrogenase (Complex I) that is believed to belong to the minimal assembly required for catalysis. Complex I functions in the transfer of electrons from NADH to the respiratory chain. The immediate electron acceptor for the enzyme is believed to be ubiquinone. The sequence is that of NADH-ubiquinone oxidoreductase chain 3 (ND3) from Branchiostoma lanceolatum (Common lancelet).